Here is a 424-residue protein sequence, read N- to C-terminus: Enolase (424 aa).

Gln-162 provides a ligand contact to (2R)-2-phosphoglycerate. Residue Glu-204 is the Proton donor of the active site. Residues Asp-241, Glu-284, and Asp-311 each coordinate Mg(2+). Residues Lys-336, Arg-365, Ser-366, and Lys-387 each coordinate (2R)-2-phosphoglycerate. The Proton acceptor role is filled by Lys-336.

This sequence belongs to the enolase family. Requires Mg(2+) as cofactor.

Its subcellular location is the cytoplasm. It is found in the secreted. The protein localises to the cell surface. It catalyses the reaction (2R)-2-phosphoglycerate = phosphoenolpyruvate + H2O. It functions in the pathway carbohydrate degradation; glycolysis; pyruvate from D-glyceraldehyde 3-phosphate: step 4/5. In terms of biological role, catalyzes the reversible conversion of 2-phosphoglycerate (2-PG) into phosphoenolpyruvate (PEP). It is essential for the degradation of carbohydrates via glycolysis. The protein is Enolase of Parvibaculum lavamentivorans (strain DS-1 / DSM 13023 / NCIMB 13966).